Reading from the N-terminus, the 659-residue chain is Polyamine transporter 4 (659 aa).

2 stretches are compositionally biased toward polar residues: residues 1–20 and 28–45; these read MPSS…NIQQ and NVTN…TGSI. The tract at residues 1-81 is disordered; the sequence is MPSSLTKTES…LDWDGPDDPD (81 aa). Residues 1–99 lie on the Cytoplasmic side of the membrane; sequence MPSSLTKTES…KKWYTTMTSA (99 aa). Residues 100–120 form a helical membrane-spanning segment; sequence FLCLVVTMGSSLYVSSVPELV. Residues 121 to 128 are Extracellular-facing; that stretch reads ERYHVSQT. Residues 129–149 traverse the membrane as a helical segment; it reads LALAGLTFYLLGLSTVIGAPL. At 150-157 the chain is on the cytoplasmic side; it reads SEVFGRKP. A helical membrane pass occupies residues 158-178; sequence VYLFSLPVSMLFTMGVGLSNG. The Extracellular portion of the chain corresponds to 179 to 187; that stretch reads HMRIILPLR. A helical membrane pass occupies residues 188-208; that stretch reads FLSGVFASPALSVGSGTILDI. Over 209-215 the chain is Cytoplasmic; sequence FDVDQVS. A helical transmembrane segment spans residues 216 to 236; the sequence is VAMTYFVLSPFLGPVLSPIMA. The Extracellular segment spans residues 237-246; it reads GFATEAKGWR. Residues 247–267 traverse the membrane as a helical segment; the sequence is WSEWIQLIAGGLILPFIALMP. Topologically, residues 268-316 are cytoplasmic; sequence ETHKGIILRKRAKKRNIALKKFSREAQKEFLKTTVTITILRPLKMLVVE. A helical membrane pass occupies residues 317 to 337; that stretch reads PIVFVFSVYVAFIFAILFGFF. The Extracellular segment spans residues 338–355; it reads EAYAVIYRGVYHMSMGIS. Residues 356–376 traverse the membrane as a helical segment; it reads GLPFIGIGVGLWIGAFFYLYI. Over 377–423 the chain is Cytoplasmic; it reads DRKYLFPKPPAGTQPLTEKERTSKRTTPYRGARDAETGELLPVVPEK. The disordered stretch occupies residues 387–408; that stretch reads AGTQPLTEKERTSKRTTPYRGA. A helical transmembrane segment spans residues 424-444; it reads FLIACKFGSVALPIGLFWQAW. The Extracellular segment spans residues 445–456; it reads TARSDVHWMAPV. A helical transmembrane segment spans residues 457–477; the sequence is AAGVPFGFGLILIFFSVLMYF. Over 478-486 the chain is Cytoplasmic; it reads STCYPPLTV. Residues 487–509 form a helical membrane-spanning segment; that stretch reads ASCLAANNLLRYVMSSVFPLFTI. Over 510–518 the chain is Extracellular; that stretch reads QMYTKMKIK. Residues 519–539 form a helical membrane-spanning segment; sequence WASTLFALVCVVMIPIPWVFE. At 540 to 659 the chain is on the cytoplasmic side; it reads KWGSKLRHKS…MATDASARMV (120 aa). Over residues 587–602 the composition is skewed to basic and acidic residues; that stretch reads METDPSTREKPGERLS. The disordered stretch occupies residues 587–631; it reads METDPSTREKPGERLSLRRTHTQPVPASFDREDGQHAQNRNEPIS. A phosphothreonine mark is found at Thr-589, Thr-606, and Thr-608. Residues 622 to 631 are compositionally biased toward polar residues; the sequence is HAQNRNEPIS. Ser-633 and Ser-646 each carry phosphoserine.

The protein belongs to the major facilitator superfamily. DHA1 family. Polyamines/proton antiporter (TC 2.A.1.2.16) subfamily.

It localises to the cell membrane. In terms of biological role, cell membrane polyamine/proton antiporter, involved in the detoxification of excess polyamines in the cytoplasm. Recognizes spermidine, spermine and the antimalarial drug quinidine, but not quinine, chloroquine and mefloquine. The polypeptide is Polyamine transporter 4 (TPO4) (Saccharomyces cerevisiae (strain ATCC 204508 / S288c) (Baker's yeast)).